Here is a 122-residue protein sequence, read N- to C-terminus: Mth938 domain-containing protein (122 aa).

The MTH138-like domain stretch occupies residues 6-122 (IASLSWGQMK…RVGGVFHSTC (117 aa)).

The protein belongs to the AAMDC family.

It localises to the cytoplasm. Functionally, may play a role in preadipocyte differentiation and adipogenesis. The chain is Mth938 domain-containing protein (AAMDC) from Bos taurus (Bovine).